Reading from the N-terminus, the 451-residue chain is tRNA modification GTPase MnmE (451 aa).

3 residues coordinate (6S)-5-formyl-5,6,7,8-tetrahydrofolate: Arg25, Glu82, and Lys121. One can recognise a TrmE-type G domain in the interval 217-374; the sequence is GMSVVILGRP…LKQHLKTEMG (158 aa). A K(+)-binding site is contributed by Asn227. GTP is bound by residues 227 to 232, 246 to 252, and 271 to 274; these read NAGKSS, TDIAGTT, and DTAG. Ser231 contributes to the Mg(2+) binding site. Residues Thr246, Ile248, and Thr251 each coordinate K(+). Thr252 provides a ligand contact to Mg(2+). Lys451 is a (6S)-5-formyl-5,6,7,8-tetrahydrofolate binding site.

It belongs to the TRAFAC class TrmE-Era-EngA-EngB-Septin-like GTPase superfamily. TrmE GTPase family. In terms of assembly, homodimer. Heterotetramer of two MnmE and two MnmG subunits. It depends on K(+) as a cofactor.

The protein resides in the cytoplasm. Exhibits a very high intrinsic GTPase hydrolysis rate. Involved in the addition of a carboxymethylaminomethyl (cmnm) group at the wobble position (U34) of certain tRNAs, forming tRNA-cmnm(5)s(2)U34. This chain is tRNA modification GTPase MnmE, found in Hydrogenovibrio crunogenus (strain DSM 25203 / XCL-2) (Thiomicrospira crunogena).